Consider the following 333-residue polypeptide: Methenyltetrahydromethanopterin cyclohydrolase (333 aa).

This sequence belongs to the MCH family.

It localises to the cytoplasm. The catalysed reaction is 5,10-methenyl-5,6,7,8-tetrahydromethanopterin + H2O = N(5)-formyl-5,6,7,8-tetrahydromethanopterin + H(+). Its pathway is one-carbon metabolism; formaldehyde degradation; formate from formaldehyde (H(4)MPT route): step 3/5. Catalyzes the hydrolysis of methenyl-H(4)MPT(+) to 5-formyl-H(4)MPT. In Rhodopirellula baltica (strain DSM 10527 / NCIMB 13988 / SH1), this protein is Methenyltetrahydromethanopterin cyclohydrolase (mch).